The sequence spans 155 residues: Interleukin-2 (155 aa).

The first 20 residues, Met-1–Gly-20, serve as a signal peptide directing secretion. The O-linked (GalNAc...) threonine glycan is linked to Thr-23. The cysteines at positions 79 and 127 are disulfide-linked.

The protein belongs to the IL-2 family.

The protein resides in the secreted. Functionally, cytokine produced by activated CD4-positive helper T-cells and to a lesser extend activated CD8-positive T-cells and natural killer (NK) cells that plays pivotal roles in the immune response and tolerance. Binds to a receptor complex composed of either the high-affinity trimeric IL-2R (IL2RA/CD25, IL2RB/CD122 and IL2RG/CD132) or the low-affinity dimeric IL-2R (IL2RB and IL2RG). Interaction with the receptor leads to oligomerization and conformation changes in the IL-2R subunits resulting in downstream signaling starting with phosphorylation of JAK1 and JAK3. In turn, JAK1 and JAK3 phosphorylate the receptor to form a docking site leading to the phosphorylation of several substrates including STAT5. This process leads to activation of several pathways including STAT, phosphoinositide-3-kinase/PI3K and mitogen-activated protein kinase/MAPK pathways. Functions as a T-cell growth factor and can increase NK-cell cytolytic activity as well. Promotes strong proliferation of activated B-cells and subsequently immunoglobulin production. Plays a pivotal role in regulating the adaptive immune system by controlling the survival and proliferation of regulatory T-cells, which are required for the maintenance of immune tolerance. Moreover, participates in the differentiation and homeostasis of effector T-cell subsets, including Th1, Th2, Th17 as well as memory CD8-positive T-cells. This chain is Interleukin-2 (IL2), found in Boselaphus tragocamelus (Nilgai).